The sequence spans 447 residues: Rab GDP dissociation inhibitor alpha (447 aa).

Belongs to the Rab GDI family. In terms of assembly, interacts with RHOH. Interacts with the non-phosphorylated forms of RAB1A, RAB3A, RAB5A, RAB5B, RAB5C, RAB8A, RAB8B, RAB10, RAB12, RAB35, and RAB43.

It is found in the cytoplasm. Its subcellular location is the golgi apparatus. It localises to the trans-Golgi network. Its function is as follows. Regulates the GDP/GTP exchange reaction of most Rab proteins by inhibiting the dissociation of GDP from them, and the subsequent binding of GTP to them. Promotes the dissociation of GDP-bound Rab proteins from the membrane and inhibits their activation. Promotes the dissociation of RAB1A, RAB3A, RAB5A and RAB10 from membranes. The sequence is that of Rab GDP dissociation inhibitor alpha (GDI1) from Pongo pygmaeus (Bornean orangutan).